The chain runs to 500 residues: Aspartyl/glutamyl-tRNA(Asn/Gln) amidotransferase subunit B (500 aa).

This sequence belongs to the GatB/GatE family. GatB subfamily. In terms of assembly, heterotrimer of A, B and C subunits.

The catalysed reaction is L-glutamyl-tRNA(Gln) + L-glutamine + ATP + H2O = L-glutaminyl-tRNA(Gln) + L-glutamate + ADP + phosphate + H(+). It carries out the reaction L-aspartyl-tRNA(Asn) + L-glutamine + ATP + H2O = L-asparaginyl-tRNA(Asn) + L-glutamate + ADP + phosphate + 2 H(+). In terms of biological role, allows the formation of correctly charged Asn-tRNA(Asn) or Gln-tRNA(Gln) through the transamidation of misacylated Asp-tRNA(Asn) or Glu-tRNA(Gln) in organisms which lack either or both of asparaginyl-tRNA or glutaminyl-tRNA synthetases. The reaction takes place in the presence of glutamine and ATP through an activated phospho-Asp-tRNA(Asn) or phospho-Glu-tRNA(Gln). The chain is Aspartyl/glutamyl-tRNA(Asn/Gln) amidotransferase subunit B from Allorhizobium ampelinum (strain ATCC BAA-846 / DSM 112012 / S4) (Agrobacterium vitis (strain S4)).